The primary structure comprises 283 residues: Phosphatidylserine decarboxylase proenzyme (283 aa).

Active-site charge relay system; for autoendoproteolytic cleavage activity residues include Asp90, His143, and Ser248. Ser248 functions as the Schiff-base intermediate with substrate; via pyruvic acid; for decarboxylase activity in the catalytic mechanism. Position 248 is a pyruvic acid (Ser); by autocatalysis (Ser248).

It belongs to the phosphatidylserine decarboxylase family. PSD-B subfamily. Prokaryotic type I sub-subfamily. As to quaternary structure, heterodimer of a large membrane-associated beta subunit and a small pyruvoyl-containing alpha subunit. Pyruvate serves as cofactor. In terms of processing, is synthesized initially as an inactive proenzyme. Formation of the active enzyme involves a self-maturation process in which the active site pyruvoyl group is generated from an internal serine residue via an autocatalytic post-translational modification. Two non-identical subunits are generated from the proenzyme in this reaction, and the pyruvate is formed at the N-terminus of the alpha chain, which is derived from the carboxyl end of the proenzyme. The autoendoproteolytic cleavage occurs by a canonical serine protease mechanism, in which the side chain hydroxyl group of the serine supplies its oxygen atom to form the C-terminus of the beta chain, while the remainder of the serine residue undergoes an oxidative deamination to produce ammonia and the pyruvoyl prosthetic group on the alpha chain. During this reaction, the Ser that is part of the protease active site of the proenzyme becomes the pyruvoyl prosthetic group, which constitutes an essential element of the active site of the mature decarboxylase.

The protein localises to the cell membrane. It catalyses the reaction a 1,2-diacyl-sn-glycero-3-phospho-L-serine + H(+) = a 1,2-diacyl-sn-glycero-3-phosphoethanolamine + CO2. Its pathway is phospholipid metabolism; phosphatidylethanolamine biosynthesis; phosphatidylethanolamine from CDP-diacylglycerol: step 2/2. Its function is as follows. Catalyzes the formation of phosphatidylethanolamine (PtdEtn) from phosphatidylserine (PtdSer). The chain is Phosphatidylserine decarboxylase proenzyme from Francisella tularensis subsp. mediasiatica (strain FSC147).